The primary structure comprises 66 residues: DNA gyrase inhibitor YacG (66 aa).

Cys9, Cys12, Cys28, and Cys32 together coordinate Zn(2+). Residues 45-66 (HKIAGSEESEDELYSGDLEPRH) are disordered.

This sequence belongs to the DNA gyrase inhibitor YacG family. Interacts with GyrB. Requires Zn(2+) as cofactor.

Inhibits all the catalytic activities of DNA gyrase by preventing its interaction with DNA. Acts by binding directly to the C-terminal domain of GyrB, which probably disrupts DNA binding by the gyrase. The protein is DNA gyrase inhibitor YacG of Pseudomonas putida (strain ATCC 47054 / DSM 6125 / CFBP 8728 / NCIMB 11950 / KT2440).